A 216-amino-acid chain; its full sequence is UPF0502 protein VPA1223 (216 aa).

The protein belongs to the UPF0502 family.

The sequence is that of UPF0502 protein VPA1223 from Vibrio parahaemolyticus serotype O3:K6 (strain RIMD 2210633).